A 213-amino-acid chain; its full sequence is Validoxylamine A 7'-phosphate phosphatase (213 aa).

The Nucleophile role is filled by Asp-8. 2 residues coordinate a divalent metal cation: Asp-8 and Asp-10. Residues Asp-8–Asp-10, Thr-107–Ser-108, and Lys-140 contribute to the substrate site. Asp-10 functions as the Proton donor in the catalytic mechanism. Residue Asp-165 coordinates a divalent metal cation.

This sequence belongs to the HAD-like hydrolase superfamily. CbbY/CbbZ/Gph/YieH family. Mg(2+) serves as cofactor. The cofactor is Mn(2+). Co(2+) is required as a cofactor.

The catalysed reaction is validoxylamine A 7'-phosphate + H2O = validoxylamine A + phosphate. In terms of biological role, involved in the biosynthesis of the antifungal agent validamycin A. Catalyzes the dephosphorylation of validoxylamine A 7'-phosphate to yield validoxylamine A. VldH is also able to convert trehalose 6-phosphate to trehalose. The chain is Validoxylamine A 7'-phosphate phosphatase from Streptomyces hygroscopicus subsp. limoneus.